The sequence spans 66 residues: Large ribosomal subunit protein uL29 (66 aa).

This sequence belongs to the universal ribosomal protein uL29 family.

The chain is Large ribosomal subunit protein uL29 from Lachnospira eligens (strain ATCC 27750 / DSM 3376 / VPI C15-48 / C15-B4) (Eubacterium eligens).